Reading from the N-terminus, the 581-residue chain is Arginine--tRNA ligase (581 aa).

Residues 126–136 (PNLAKEMHVGH) carry the 'HIGH' region motif.

Belongs to the class-I aminoacyl-tRNA synthetase family. As to quaternary structure, monomer.

It localises to the cytoplasm. The catalysed reaction is tRNA(Arg) + L-arginine + ATP = L-arginyl-tRNA(Arg) + AMP + diphosphate. The polypeptide is Arginine--tRNA ligase (Shewanella denitrificans (strain OS217 / ATCC BAA-1090 / DSM 15013)).